A 567-amino-acid chain; its full sequence is DNA ligase (567 aa).

Glutamate 260 lines the ATP pocket. Residue lysine 262 is the N6-AMP-lysine intermediate of the active site. Residues arginine 267, arginine 282, glutamate 312, phenylalanine 352, arginine 427, and lysine 433 each coordinate ATP.

Belongs to the ATP-dependent DNA ligase family. Requires Mg(2+) as cofactor.

The catalysed reaction is ATP + (deoxyribonucleotide)n-3'-hydroxyl + 5'-phospho-(deoxyribonucleotide)m = (deoxyribonucleotide)n+m + AMP + diphosphate.. Its function is as follows. DNA ligase that seals nicks in double-stranded DNA during DNA replication, DNA recombination and DNA repair. The protein is DNA ligase of Methanococcoides burtonii (strain DSM 6242 / NBRC 107633 / OCM 468 / ACE-M).